Reading from the N-terminus, the 431-residue chain is Glucose-6-phosphate isomerase (431 aa).

The Proton donor role is filled by Glu-284. Catalysis depends on residues His-305 and Lys-420.

The protein belongs to the GPI family.

It is found in the cytoplasm. The enzyme catalyses alpha-D-glucose 6-phosphate = beta-D-fructose 6-phosphate. Its pathway is carbohydrate biosynthesis; gluconeogenesis. It functions in the pathway carbohydrate degradation; glycolysis; D-glyceraldehyde 3-phosphate and glycerone phosphate from D-glucose: step 2/4. Catalyzes the reversible isomerization of glucose-6-phosphate to fructose-6-phosphate. The protein is Glucose-6-phosphate isomerase of Mycoplasma genitalium (strain ATCC 33530 / DSM 19775 / NCTC 10195 / G37) (Mycoplasmoides genitalium).